Reading from the N-terminus, the 257-residue chain is Imidazole glycerol phosphate synthase subunit HisF (257 aa).

Catalysis depends on residues D11 and D130.

This sequence belongs to the HisA/HisF family. As to quaternary structure, heterodimer of HisH and HisF.

It localises to the cytoplasm. It catalyses the reaction 5-[(5-phospho-1-deoxy-D-ribulos-1-ylimino)methylamino]-1-(5-phospho-beta-D-ribosyl)imidazole-4-carboxamide + L-glutamine = D-erythro-1-(imidazol-4-yl)glycerol 3-phosphate + 5-amino-1-(5-phospho-beta-D-ribosyl)imidazole-4-carboxamide + L-glutamate + H(+). It participates in amino-acid biosynthesis; L-histidine biosynthesis; L-histidine from 5-phospho-alpha-D-ribose 1-diphosphate: step 5/9. IGPS catalyzes the conversion of PRFAR and glutamine to IGP, AICAR and glutamate. The HisF subunit catalyzes the cyclization activity that produces IGP and AICAR from PRFAR using the ammonia provided by the HisH subunit. This chain is Imidazole glycerol phosphate synthase subunit HisF, found in Shewanella loihica (strain ATCC BAA-1088 / PV-4).